The primary structure comprises 387 residues: Gibberellic acid methyltransferase 2 (387 aa).

S-adenosyl-L-homocysteine is bound at residue Tyr-33. Gln-40 is a binding site for gibberellin A4. 6 residues coordinate S-adenosyl-L-homocysteine: Cys-74, Asn-79, Asp-113, Leu-114, Ser-146, and Phe-147. Positions 167 and 168 each coordinate gibberellin A4. Residues Asn-185, Arg-275, Asp-276, Phe-278, and Asn-279 each coordinate Mg(2+).

The protein belongs to the methyltransferase superfamily. Type-7 methyltransferase family. SABATH subfamily. Mg(2+) is required as a cofactor. In terms of tissue distribution, expressed in siliques and germinating seeds. Not detected in leaves, stems, flowers and roots.

It catalyses the reaction gibberellin A4 + S-adenosyl-L-methionine = O-methyl gibberellin A4 + S-adenosyl-L-homocysteine. Down-regulated by Zn(2+), Cu(2+) and Fe(3+). No effect of K(+), NH(4+), Na(+), Ca(2+), Mg(2+), Mn(2+) and Fe(2+). Methylates the carboxyl group of several gibberellins (GAs). Substrate preference is GA4 &gt; GA34 &gt; GA9 &gt; GA3 &gt; GA1 &gt; GA51 &gt; GA20. No activity with diterpenes abietic acid and ent-kaurenoic acid. The chain is Gibberellic acid methyltransferase 2 (GAMT2) from Arabidopsis thaliana (Mouse-ear cress).